Consider the following 868-residue polypeptide: Probable inorganic carbon transporter subunit DabA (868 aa).

C392, D394, H574, and C589 together coordinate Zn(2+).

It belongs to the inorganic carbon transporter (TC 9.A.2) DabA family. Forms a complex with DabB. Zn(2+) is required as a cofactor.

Its subcellular location is the cell membrane. Its function is as follows. Part of an energy-coupled inorganic carbon pump. The chain is Probable inorganic carbon transporter subunit DabA from Bacillus cereus (strain G9842).